The following is a 115-amino-acid chain: Skin calcitonin gene-related peptide (115 aa).

A signal peptide spans M1 to A25. Positions A26–R69 are cleaved as a propeptide — removed in mature form by a carboxypeptidase. Residues C71 and C76 are joined by a disulfide bond. Residue F106 is modified to Phenylalanine amide. The propeptide at G107–V115 is removed in mature form by an endoprotease.

As to expression, skin, intestine and brain.

It localises to the secreted. Its function is as follows. CGRP induces vasodilation. It dilates a variety of vessels including the coronary, cerebral and systemic vasculature. Its abundance in the CNS also points toward a neurotransmitter or neuromodulator role. This chain is Skin calcitonin gene-related peptide, found in Phyllomedusa bicolor (Two-colored leaf frog).